Reading from the N-terminus, the 421-residue chain is MSDNGPQSQRSAPRITFGGPADSNDNNQDGGRSGARPKQRRPQGLPNNTASWFTALTQHGKEELRFPRGQGVPINTNSGKDDQIGYYRRATRRVRGGDGKMKELSPRWYFYYLGTGPEASLPYGANKEGIVWVATEGALNTPKDHIGTRNPNNNAAIVLQLPQGTTLPKGFYAEGSRGGSQSSSRSSSRSRGNSRNSTPGSSRGSSPARLASGGGETALALLLLDRLNQLESKVSGKGQQQPGQTVTKKSAAEASKKPRQKRTATKQYNVTQAFGRRGPEQTQGNFGDQELIRQGIDYKHWPQIAQFAPSASAFFGMSRIGMEVTPSGTWLTYHGAIKLDDKDPQFKDNVILLNKHIDAYKTFPPTEPKKDKKKKTDEAQPLPQRQKKQPTVTLLPAADMDDFSRQLQHSMSGASADSTQA.

Polar residues predominate over residues 1-11 (MSDNGPQSQRS). Disordered regions lie at residues 1-50 (MSDN…NNTA) and 63-82 (ELRFPRGQGVPINTNSGKDD). Positions 41-186 (RPQGLPNNTA…RGGSQSSSRS (146 aa)) are RNA-binding. One can recognise a CoV N NTD domain in the interval 48–175 (NTASWFTALT…TLPKGFYAEG (128 aa)). Arg92, Arg107, and Arg149 together coordinate RNA. Disordered regions lie at residues 168 to 212 (PKGF…RLAS), 233 to 271 (KVSGKGQQQPGQTVTKKSAAEASKKPRQKRTATKQYNVT), and 361 to 421 (KTFP…STQA). Residue Ser176 is modified to Phosphoserine; by host. Low complexity predominate over residues 179–212 (GSQSSSRSSSRSRGNSRNSTPGSSRGSSPARLAS). Positions 237-248 (KGQQQPGQTVTK) are enriched in polar residues. The region spanning 247 to 364 (TKKSAAEASK…KHIDAYKTFP (118 aa)) is the CoV N CTD domain. The segment at 258–361 (PRQKRTATKQ…LLNKHIDAYK (104 aa)) is dimerization. The span at 367–378 (EPKKDKKKKTDE) shows a compositional bias: basic and acidic residues. The segment covering 405-421 (RQLQHSMSGASADSTQA) has biased composition (polar residues).

The protein belongs to the betacoronavirus nucleocapsid protein family. As to quaternary structure, homooligomer. Both monomeric and oligomeric forms interact with RNA. Interacts with protein M. Interacts with NSP3; this interaction serves to tether the genome to the newly translated replicase-transcriptase complex at a very early stage of infection. In terms of processing, ADP-ribosylated. The ADP-ribosylation is retained in the virion during infection. Phosphorylated on serine and threonine residues.

The protein resides in the virion. It localises to the host endoplasmic reticulum-Golgi intermediate compartment. The protein localises to the host Golgi apparatus. Functionally, packages the positive strand viral genome RNA into a helical ribonucleocapsid (RNP) and plays a fundamental role during virion assembly through its interactions with the viral genome and membrane protein M. Plays an important role in enhancing the efficiency of subgenomic viral RNA transcription as well as viral replication. The sequence is that of Nucleoprotein from Rhinolophus sinicus (Chinese rufous horseshoe bat).